We begin with the raw amino-acid sequence, 160 residues long: Ribosome maturation factor RimP (160 aa).

Belongs to the RimP family.

Its subcellular location is the cytoplasm. Its function is as follows. Required for maturation of 30S ribosomal subunits. This is Ribosome maturation factor RimP from Geobacter sp. (strain M21).